The sequence spans 700 residues: Elongation factor G (700 aa).

A tr-type G domain is found at 10 to 285; that stretch reads DRTRNIGIMA…AVIDYLPSPL (276 aa). Residues 19 to 26, 83 to 87, and 137 to 140 each bind GTP; these read AHIDAGKT, DTPGH, and NKMD.

Belongs to the TRAFAC class translation factor GTPase superfamily. Classic translation factor GTPase family. EF-G/EF-2 subfamily.

The protein localises to the cytoplasm. In terms of biological role, catalyzes the GTP-dependent ribosomal translocation step during translation elongation. During this step, the ribosome changes from the pre-translocational (PRE) to the post-translocational (POST) state as the newly formed A-site-bound peptidyl-tRNA and P-site-bound deacylated tRNA move to the P and E sites, respectively. Catalyzes the coordinated movement of the two tRNA molecules, the mRNA and conformational changes in the ribosome. This is Elongation factor G from Lacticaseibacillus casei (strain BL23) (Lactobacillus casei).